The following is a 180-amino-acid chain: Large ribosomal subunit protein uL6 (180 aa).

Belongs to the universal ribosomal protein uL6 family. Part of the 50S ribosomal subunit.

This protein binds to the 23S rRNA, and is important in its secondary structure. It is located near the subunit interface in the base of the L7/L12 stalk, and near the tRNA binding site of the peptidyltransferase center. The protein is Large ribosomal subunit protein uL6 of Clostridium botulinum (strain Langeland / NCTC 10281 / Type F).